The following is a 147-amino-acid chain: Spermidine export protein MdtJ (147 aa).

4 consecutive transmembrane segments (helical) span residues 1 to 21, 31 to 51, 54 to 74, and 81 to 101; these read MIYWIFLGLAIIAEIIGTLSM, TGHIVMYFMITGSYVMLSLAV, VALGVAYALWEGIGILIITIF, and ETLSPLKIAGLVTLIGGILLV. The tract at residues 105-147 is disordered; that stretch reads TRKPKQPNCHRGNRPPSVQELKTQTTGHHKGVAVESGEHHAAA.

Belongs to the drug/metabolite transporter (DMT) superfamily. Small multidrug resistance (SMR) (TC 2.A.7.1) family. MdtJ subfamily. As to quaternary structure, forms a complex with MdtI.

The protein localises to the cell inner membrane. Its function is as follows. Catalyzes the excretion of spermidine. This Yersinia pestis bv. Antiqua (strain Antiqua) protein is Spermidine export protein MdtJ.